The primary structure comprises 152 residues: Leptin (152 aa).

The N-terminal stretch at 1–26 (MDHILALVLALLPLSLCVALPGALDA) is a signal peptide. A disulfide bridge connects residues Cys-109 and Cys-152.

Belongs to the leptin family. In terms of tissue distribution, expressed mostly in the liver.

The protein localises to the secreted. In terms of biological role, may function as part of a signaling pathway that acts to regulate the size of the body fat depot. The chain is Leptin (lep) from Takifugu rubripes (Japanese pufferfish).